A 67-amino-acid chain; its full sequence is Large ribosomal subunit protein bL32 (67 aa).

Basic residues predominate over residues 1-19; it reads MAVPKRKMSRANTRARRAQ. The interval 1–20 is disordered; that stretch reads MAVPKRKMSRANTRARRAQW.

Belongs to the bacterial ribosomal protein bL32 family.

The polypeptide is Large ribosomal subunit protein bL32 (Paenarthrobacter aurescens (strain TC1)).